The primary structure comprises 436 residues: Enolase (436 aa).

Substrate is bound by residues His-159 and Glu-168. Catalysis depends on Glu-211, which acts as the Proton donor. Residues Asp-246, Glu-295, and Asp-322 each contribute to the Mg(2+) site. Glu-295 and Asp-322 together coordinate substrate. The active-site Proton acceptor is the Lys-347. Residues 374-377 (SHRS) and Lys-398 contribute to the substrate site.

This sequence belongs to the enolase family. As to quaternary structure, homodimer. Mg(2+) serves as cofactor.

The protein resides in the cytoplasm. It carries out the reaction (2R)-2-phosphoglycerate = phosphoenolpyruvate + H2O. It functions in the pathway carbohydrate degradation; glycolysis; pyruvate from D-glyceraldehyde 3-phosphate: step 4/5. The chain is Enolase from Neocallimastix frontalis (Rumen fungus).